Reading from the N-terminus, the 687-residue chain is Polyphosphate kinase (687 aa).

Asn45 is an ATP binding site. 2 residues coordinate Mg(2+): Arg375 and Arg405. His435 functions as the Phosphohistidine intermediate in the catalytic mechanism. The ATP site is built by Tyr472, Arg568, and His596.

It belongs to the polyphosphate kinase 1 (PPK1) family. Mg(2+) is required as a cofactor. An intermediate of this reaction is the autophosphorylated ppk in which a phosphate is covalently linked to a histidine residue through a N-P bond.

It catalyses the reaction [phosphate](n) + ATP = [phosphate](n+1) + ADP. Functionally, catalyzes the reversible transfer of the terminal phosphate of ATP to form a long-chain polyphosphate (polyP). This is Polyphosphate kinase from Burkholderia vietnamiensis (strain G4 / LMG 22486) (Burkholderia cepacia (strain R1808)).